A 231-amino-acid polypeptide reads, in one-letter code: Sugar fermentation stimulation protein homolog (231 aa).

Belongs to the SfsA family.

The protein is Sugar fermentation stimulation protein homolog of Pyrobaculum islandicum (strain DSM 4184 / JCM 9189 / GEO3).